Reading from the N-terminus, the 136-residue chain is Histone H3 (136 aa).

Residues methionine 1–glycine 45 form a disordered region. Lysine 5 is modified (N6,N6,N6-trimethyllysine; alternate). Lysine 5 is subject to N6,N6-dimethyllysine; alternate. An N6-methyllysine; alternate mark is found at lysine 5 and lysine 10. Residue lysine 10 is modified to N6-acetyllysine; alternate. At serine 11 the chain carries Phosphoserine. Position 15 is an N6,N6-dimethyllysine; alternate (lysine 15). Lysine 15, lysine 19, lysine 24, lysine 28, and lysine 37 each carry N6-methyllysine; alternate. N6-acetyllysine; alternate occurs at positions 15, 19, 24, 28, and 37. Residues lysine 28 and lysine 37 each carry the N6,N6,N6-trimethyllysine; alternate modification. Lysine 28 and lysine 37 each carry N6,N6-dimethyllysine; alternate. N6-acetyllysine is present on residues lysine 57 and lysine 65. Lysine 80 carries the N6,N6,N6-trimethyllysine; alternate modification. Residue lysine 80 is modified to N6,N6-dimethyllysine; alternate. Lysine 80 carries the post-translational modification N6-methyllysine; alternate.

This sequence belongs to the histone H3 family. The nucleosome is a histone octamer containing two molecules each of H2A, H2B, H3 and H4 assembled in one H3-H4 heterotetramer and two H2A-H2B heterodimers. The octamer wraps approximately 147 bp of DNA. In terms of processing, phosphorylated to form H3S10ph. H3S10ph promotes subsequent H3K14ac formation and is required for transcriptional activation through TBP recruitment to the promoters. Mono-, di- and trimethylated by the COMPASS complex to form H3K4me1/2/3. H3K4me activates gene expression by regulating transcription elongation and plays a role in telomere length maintenance. H3K4me enrichment correlates with transcription levels, and occurs in a 5' to 3' gradient with H3K4me3 enrichment at the 5'-end of genes, shifting to H3K4me2 and then H3K4me1. Methylated by SET2 to form H3K36me. H3K36me represses gene expression. Methylated by DOT1 to form H3K79me. H3K79me is required for association of SIR proteins with telomeric regions and for telomeric silencing. The COMPASS-mediated formation of H3K4me2/3 and the DOT1-mediated formation of H3K79me require H2BK123ub1. Post-translationally, acetylation of histone H3 leads to transcriptional activation. H3K14ac formation by GCN5 is promoted by H3S10ph. H3K14ac can also be formed by ESA1. H3K56ac formation occurs predominantly in newly synthesized H3 molecules during G1, S and G2/M of the cell cycle and may be involved in DNA repair.

The protein localises to the nucleus. Its subcellular location is the chromosome. Core component of nucleosome. Nucleosomes wrap and compact DNA into chromatin, limiting DNA accessibility to the cellular machineries which require DNA as a template. Histones thereby play a central role in transcription regulation, DNA repair, DNA replication and chromosomal stability. DNA accessibility is regulated via a complex set of post-translational modifications of histones, also called histone code, and nucleosome remodeling. The polypeptide is Histone H3 (H3.1) (Mortierella alpina (Oleaginous fungus)).